A 215-amino-acid polypeptide reads, in one-letter code: Thymidylate kinase (215 aa).

13–20 (GLEGAGKS) contributes to the ATP binding site.

The protein belongs to the thymidylate kinase family.

It carries out the reaction dTMP + ATP = dTDP + ADP. Its function is as follows. Phosphorylation of dTMP to form dTDP in both de novo and salvage pathways of dTTP synthesis. The sequence is that of Thymidylate kinase from Shewanella frigidimarina (strain NCIMB 400).